The sequence spans 171 residues: Putative RING finger protein 027R (171 aa).

The segment at 121–163 (CAVCMTNPVWVDFVWSCKHISTCIKCLKMLSRGSNGFKCPICR) adopts an RING-type zinc-finger fold.

It belongs to the IIV-6 157L family.

The polypeptide is Putative RING finger protein 027R (Aedes vexans (Inland floodwater mosquito)).